A 471-amino-acid polypeptide reads, in one-letter code: Elongation factor 1-alpha (471 aa).

The 230-residue stretch at 10–239 folds into the tr-type G domain; sequence KPRLNACFIG…EALNYQDVPE (230 aa). Residues 19 to 26 are G1; sequence GHVDSGKS. 19–26 is a GTP binding site; sequence GHVDSGKS. A G2 region spans residues 75 to 79; the sequence is GITIT. Residues 96–99 form a G3 region; sequence DCPG. GTP-binding positions include 96 to 100 and 156 to 159; these read DCPGH and NKMD. Residues 156–159 are G4; the sequence is NKMD. The G5 stretch occupies residues 196-198; the sequence is SAF.

This sequence belongs to the TRAFAC class translation factor GTPase superfamily. Classic translation factor GTPase family. EF-Tu/EF-1A subfamily. As to quaternary structure, component of the eukaryotic elongation factor 1 complex (eEF1).

Its subcellular location is the cytoplasm. The protein operates within protein biosynthesis; polypeptide chain elongation. Functionally, GTP-binding component of the eukaryotic elongation factor 1 complex (eEF1). In its active GTP-bound form, binds to and delivers aminoacyl-tRNA to the A-site of ribosomes during protein biosynthesis. In the presence of a correct codon-anticodon match between the aminoacyl-tRNA and the A-site codon of the ribosome-bound mRNA, the ribosome acts as a GTPase activator and the GTP is hydrolyzed. The inactive GDP-bound form leaves the ribosome and must be recycled by its guanine nucleotide exchange factor (GEF) (eEF1B subcomplex) before binding another molecule of aminoacyl-tRNA. Required for nuclear export of aminoacyl-tRNAs. May also be involved in translational quality control by targeting cotranslationally damaged proteins to the proteasome. The chain is Elongation factor 1-alpha (TEF1) from Encephalitozoon cuniculi (strain GB-M1) (Microsporidian parasite).